Here is a 341-residue protein sequence, read N- to C-terminus: Geranylgeranyl pyrophosphate synthase penG (341 aa).

Isopentenyl diphosphate-binding residues include Lys68, Arg71, and His100. Residues Asp107 and Asp111 each coordinate Mg(2+). Residue Arg116 coordinates dimethylallyl diphosphate. Arg117 lines the isopentenyl diphosphate pocket. Dimethylallyl diphosphate-binding residues include Lys194, Thr195, and Gln228. Asp231 lines the Mg(2+) pocket. Dimethylallyl diphosphate contacts are provided by Asn235, Lys245, and Lys255.

The protein belongs to the FPP/GGPP synthase family. The cofactor is Mg(2+).

It catalyses the reaction isopentenyl diphosphate + dimethylallyl diphosphate = (2E)-geranyl diphosphate + diphosphate. It carries out the reaction isopentenyl diphosphate + (2E)-geranyl diphosphate = (2E,6E)-farnesyl diphosphate + diphosphate. The enzyme catalyses isopentenyl diphosphate + (2E,6E)-farnesyl diphosphate = (2E,6E,10E)-geranylgeranyl diphosphate + diphosphate. Its pathway is secondary metabolite biosynthesis. Its function is as follows. Geranylgeranyl pyrophosphate synthase; part of the gene cluster that mediates the biosynthesis of the indole diterpenes penitrems. The geranylgeranyl diphosphate (GGPP) synthase penG catalyzes the first step in penitrem biosynthesis via conversion of farnesyl pyrophosphate and isopentyl pyrophosphate into geranylgeranyl pyrophosphate (GGPP). Condensation of indole-3-glycerol phosphate with GGPP by the prenyl transferase penC then forms 3-geranylgeranylindole (3-GGI). Epoxidation by the FAD-dependent monooxygenase penM leads to a epoxidized-GGI that is substrate of the terpene cyclase penB for cyclization to yield paspaline. Paspaline is subsequently converted to 13-desoxypaxilline by the cytochrome P450 monooxygenase penP, the latter being then converted to paxilline by the cytochrome P450 monooxygenase penQ. Paxilline is converted to beta-paxitriol via C-10 ketoreduction by the short-chain dehydrogenase PC-15 which can be monoprenylated at the C-20 by the indole diterpene prenyltransferase penD. A two-step elimination (acetylation and elimination) process performed by the O-acetyltransferase PC-16 and the P.simplicissimum ptmI-ortholog not yet identified in P.crustosum, leads to the production of the prenylated form of penijanthine. The FAD-linked oxidoreductase ptmO then converts the prenylated form of penijanthine into PC-M5 which is in turn transformed into PC-M4 by the aromatic dimethylallyltransferase PC-22. A series of oxidation steps involving 4 cytochrome P450 monooxygenases (PC-21, PC-05, PC-23, PC-20) and a FAD-dependent monooxygenase (PC-14) are required for the transformation of PC-M4 to penitrems A and E. Synthesis of these final products is proposed to proceed via penitrems D and C (PC-21, PC-05, PC-14) and penitrems B and F (PC-21, PC-05, PC-14, PC-23). In Penicillium crustosum (Blue mold fungus), this protein is Geranylgeranyl pyrophosphate synthase penG.